The following is a 1483-amino-acid chain: Heme-responsive zinc finger transcription factor HAP1 (1483 aa).

The span at 1-50 (MSNTPYNSSVPSIASMTQSSVSRSPNMHTATTPGANTSSNSPPLHMSSDS) shows a compositional bias: polar residues. Residues 1–56 (MSNTPYNSSVPSIASMTQSSVSRSPNMHTATTPGANTSSNSPPLHMSSDSSKIKRK) form a disordered region. Zn(2+) is bound by residues cysteine 64, cysteine 67, cysteine 74, cysteine 81, cysteine 84, and cysteine 93. The zn(2)-C6 fungal-type DNA-binding region spans 64 to 93 (CTICRKRKVKCDKLRPHCQQCTKTGVAHLC). A coiled-coil region spans residues 105 to 134 (EKELLKDNELKKLRERVKSLEKTLSKVHSS). Positions 162–176 (VNANTGSASSASHMH) are enriched in polar residues. The segment at 162 to 208 (VNANTGSASSASHMHQQQQQQQQQEQQQDFSRSANANANSSSLSISN) is disordered. Over residues 177 to 208 (QQQQQQQQQEQQQDFSRSANANANSSSLSISN) the composition is skewed to low complexity. The heme-responsive; required for HMC formation stretch occupies residues 244–444 (KGDPYLKLLW…NTIPHHQPQS (201 aa)). 6 HRM repeats span residues 280 to 285 (KCPINH), 299 to 304 (KCPVDH), 323 to 328 (KCPVDH), 347 to 352 (RCPVDH), 389 to 394 (KCPVDH), and 415 to 420 (RCPIDH). 2 stretches are compositionally biased toward polar residues: residues 432–447 (STHN…SGSH) and 706–734 (QLNA…NPTL). Disordered regions lie at residues 432-458 (STHN…NRKH) and 706-767 (QLNA…KENQ). The segment covering 735 to 759 (NNNMSAATTNSSSRSGSADSRSGSN) has biased composition (low complexity). The HRM 7 repeat unit spans residues 1192–1197 (KCPVYQ). Disordered regions lie at residues 1266 to 1289 (DGYI…SNGL) and 1386 to 1411 (NTDT…ASNS). Polar residues predominate over residues 1388–1411 (DTSANGSALSTLTSPQGSDLASNS).

As to quaternary structure, binds DNA as a homodimer. Interacts with SRO9 and YDJ1. In the absence of heme, binds to at least four cellular proteins, including YDJ1 and SRO9, forming a high-molecular-weight complex (HMC) which results in repression of its activity and dictates its DNA-binding specificity.

Its subcellular location is the nucleus. Its function is as follows. Regulation of oxygen dependent gene expression. It modulates the expression of Iso-1 (CYP1) and Iso-2 (CYP3) cytochrome c. In response to heme, promotes transcription of genes encoding functions required for respiration, controlling oxidative damage and repression of anaerobic genes. Binds to the sequence 5'-CGGNNNTNNCGG-3'. This chain is Heme-responsive zinc finger transcription factor HAP1 (HAP1), found in Saccharomyces cerevisiae (strain JAY291) (Baker's yeast).